A 1408-amino-acid chain; its full sequence is MKDLLKFLKQQSKTEEFNGIKIGLASPDLIRSWSFGEVKKPETINYRTFKPEREGLFCARIFGPVKDYECLCGKYKRLKHRGVICEKCGVEVTQTKVRRERMGHIDLASPVAHIWFLKSLPSRIGLMLDMTLRDIERVLYFESFVVIEPGMTTLERGQMLTEETYLDALEEYGDEFEAKMGAEAVLELLRAINLAEQIEQMREELPSINSETRRKKVTKRLKLMEAFFTSGNKPEWMILKVLPVLPPDLRPLVPLDGGRFATSDLNDLYRRVINRNNRLKRLLDLAAPDIIVRNEKRMLQESVDALLDNGRRGRAITGSNKRPLKSLADMIKGKQGRFRQNLLGKRVDYSGRSVITVGPTLRLHQCGLPKKMALELFKPFIYGKLEARGLATTIKAAKKMVEREQAEVWDVLDEVIREHPVMLNRAPTLHRLGIQAFEPVLIEGKAIQLHPLVCAAYNADFDGDQMAVHVPLTLEAQLEARALMMSTNNILSPANGEPVITPSQDVVLGLYYTSRECINGRGEGMAFADVSEVEKAYATGVAELHARVKVRITETNIADDGERTKSTRIIDTTVGRALLSLILPEGLSYDLVNQNMGKKQISKLLNTCYRQLGLKDTVIFADQLMYTGFRFATISGASVGIDDMVIPDEKYTLVADAEAEVLEIQEQFQSGLVTAGERYNKVIDIWASANEKVSKAMMENLSTETVINRDGVPEQQASFNSIYMMADSGARGSAAQIRQLAGMRGLMAKPDGSIIETPITANFREGLNVLQYFISTHGARKGLADTALKTANSGYLTRRLVDVAQDLVVIEDDCGVEHGLTMKPLIEGGDVVEPLRERVLGRVVALDVMKPGTNEVLAPRNTLLDEAWCNTLEEHSIDEVIVRSVITCDTDFGVCAACYGRDLARGHIINHGEAIGVVAAQSIGEPGTQLTMRTFHIGGAASRASAENNVQVKNAGSLKLHNAKHVSNIDGKLVIVSRSSELAIIDELGREKERYKVPYGTVLEKLEDSEVAAGEIIANWDPHTHPIISEVAGSVKFVDMIDGVTMTRQTDELTGLSSVVVLDVGARTSAGKELRPAIRLVDADGNDLMIPGTEVPAQYFLPGNAIVSKDDNAKINVGDPLARIPQESSKTRDITGGLPRVADLFEARKPKEPAILAEISGTISFGKETKGKRRLVITPADGSEHYEEMIPKWRNLNVFEGEKVERGEVIADGPEAAHDILRLRGIHNVANYIVNEVQDVYRLQGVKINDKHIEVIIRQMLRKCLITSTGDTEFLEGEQAEVSRVKIANRELIAQGKTPATFERELLGITKASLATESFISAASFQETTRVLTEAAVGGKSDPLRGLKENVIVGRLIPAGTGYAYHKTRNEERAKILSSRGKVETTTVTASEAEKNLADLLNLAGSQD.

Zn(2+) is bound by residues Cys70, Cys72, Cys85, and Cys88. Mg(2+) is bound by residues Asp460, Asp462, and Asp464. Positions 814, 888, 895, and 898 each coordinate Zn(2+).

The protein belongs to the RNA polymerase beta' chain family. As to quaternary structure, the RNAP catalytic core consists of 2 alpha, 1 beta, 1 beta' and 1 omega subunit. When a sigma factor is associated with the core the holoenzyme is formed, which can initiate transcription. The cofactor is Mg(2+). Requires Zn(2+) as cofactor.

The catalysed reaction is RNA(n) + a ribonucleoside 5'-triphosphate = RNA(n+1) + diphosphate. Its function is as follows. DNA-dependent RNA polymerase catalyzes the transcription of DNA into RNA using the four ribonucleoside triphosphates as substrates. The protein is DNA-directed RNA polymerase subunit beta' of Shewanella frigidimarina (strain NCIMB 400).